Here is a 141-residue protein sequence, read N- to C-terminus: Metallothiol transferase FosB (141 aa).

The region spanning 5–120 (SINHLLFSVS…DGHKFEFHTG (116 aa)) is the VOC domain. Mg(2+) is bound by residues His-8, His-67, and Glu-116. The active-site Proton donor/acceptor is the Glu-116.

The protein belongs to the fosfomycin resistance protein family. FosB subfamily. As to quaternary structure, homodimer. It depends on Mg(2+) as a cofactor.

The protein localises to the cytoplasm. Functionally, metallothiol transferase which confers resistance to fosfomycin by catalyzing the addition of a thiol cofactor to fosfomycin. L-cysteine is probably the physiological thiol donor. The protein is Metallothiol transferase FosB of Lysinibacillus sphaericus (strain C3-41).